The following is a 214-amino-acid chain: NADH-quinone oxidoreductase subunit C (214 aa).

This sequence belongs to the complex I 30 kDa subunit family. NDH-1 is composed of 14 different subunits. Subunits NuoB, C, D, E, F, and G constitute the peripheral sector of the complex.

It is found in the cell inner membrane. It catalyses the reaction a quinone + NADH + 5 H(+)(in) = a quinol + NAD(+) + 4 H(+)(out). Its function is as follows. NDH-1 shuttles electrons from NADH, via FMN and iron-sulfur (Fe-S) centers, to quinones in the respiratory chain. The immediate electron acceptor for the enzyme in this species is believed to be ubiquinone. Couples the redox reaction to proton translocation (for every two electrons transferred, four hydrogen ions are translocated across the cytoplasmic membrane), and thus conserves the redox energy in a proton gradient. This Francisella tularensis subsp. mediasiatica (strain FSC147) protein is NADH-quinone oxidoreductase subunit C.